Consider the following 464-residue polypeptide: Protein FAM90A11 (464 aa).

Disordered stretches follow at residues 1–42 (MMAR…DPRL), 70–389 (PATL…HDGA), and 415–437 (HSPE…SEAP). 2 stretches are compositionally biased toward basic and acidic residues: residues 74–89 (GKKE…KPRV) and 97–114 (NKDK…DPQR). Low complexity predominate over residues 180–197 (LASLSPLRKASLSSSSSL). Residues 341–356 (GPSTSPQMGRRTSAQV) are compositionally biased toward polar residues.

The protein belongs to the FAM90 family.

This chain is Protein FAM90A11, found in Homo sapiens (Human).